We begin with the raw amino-acid sequence, 295 residues long: Origin of replication complex subunit 6 (295 aa).

The disordered stretch occupies residues 212–295 (PSKRKHDDDS…MALEVSSAAN (84 aa)). The segment covering 220–236 (DSDSSGESSGDDQDELD) has biased composition (acidic residues). A compositionally biased stretch (polar residues) spans 254–263 (WKSSVLSNKQ).

It belongs to the ORC6 family. In terms of assembly, component of the origin recognition complex (ORC) composed of at least ORC1, ORC2, ORC3, ORC4, ORC5 and ORC6. ORC is regulated in a cell-cycle and development dependent manner. It is sequentially assembled at the exit from anaphase of mitosis and disassembled as cells enter S phase.

The protein resides in the nucleus. Its function is as follows. Component of the origin recognition complex (ORC) that binds origins of replication. DNA-binding is ATP-dependent. The specific DNA sequences that define origins of replication have not been identified yet. ORC is required to assemble the pre-replication complex necessary to initiate DNA replication. The chain is Origin of replication complex subunit 6 from Oryza sativa subsp. japonica (Rice).